Here is a 65-residue protein sequence, read N- to C-terminus: Large ribosomal subunit protein bL35 (65 aa).

The disordered stretch occupies residues 1 to 29 (MPKMKTNRGAAKRFKKTGSGRIKRGKAFT). Basic residues predominate over residues 10-26 (AAKRFKKTGSGRIKRGK).

This sequence belongs to the bacterial ribosomal protein bL35 family.

The chain is Large ribosomal subunit protein bL35 from Desulfotalea psychrophila (strain LSv54 / DSM 12343).